We begin with the raw amino-acid sequence, 334 residues long: Ketol-acid reductoisomerase (NADP(+)) (334 aa).

The KARI N-terminal Rossmann domain occupies 1–181 (MTTVYYDQDV…GATRAGVIET (181 aa)). Residues 25 to 28 (YGSQ), Arg-48, Ser-52, and 82 to 85 (DEIQ) contribute to the NADP(+) site. The active site involves His-107. Gly-133 serves as a coordination point for NADP(+). The 146-residue stretch at 182 to 327 (TFKEETETDL…RELREMMPFI (146 aa)) folds into the KARI C-terminal knotted domain. Mg(2+)-binding residues include Asp-190, Glu-194, Glu-226, and Glu-230. Position 251 (Ser-251) interacts with substrate.

Belongs to the ketol-acid reductoisomerase family. Mg(2+) is required as a cofactor.

It carries out the reaction (2R)-2,3-dihydroxy-3-methylbutanoate + NADP(+) = (2S)-2-acetolactate + NADPH + H(+). It catalyses the reaction (2R,3R)-2,3-dihydroxy-3-methylpentanoate + NADP(+) = (S)-2-ethyl-2-hydroxy-3-oxobutanoate + NADPH + H(+). It functions in the pathway amino-acid biosynthesis; L-isoleucine biosynthesis; L-isoleucine from 2-oxobutanoate: step 2/4. The protein operates within amino-acid biosynthesis; L-valine biosynthesis; L-valine from pyruvate: step 2/4. In terms of biological role, involved in the biosynthesis of branched-chain amino acids (BCAA). Catalyzes an alkyl-migration followed by a ketol-acid reduction of (S)-2-acetolactate (S2AL) to yield (R)-2,3-dihydroxy-isovalerate. In the isomerase reaction, S2AL is rearranged via a Mg-dependent methyl migration to produce 3-hydroxy-3-methyl-2-ketobutyrate (HMKB). In the reductase reaction, this 2-ketoacid undergoes a metal-dependent reduction by NADPH to yield (R)-2,3-dihydroxy-isovalerate. This chain is Ketol-acid reductoisomerase (NADP(+)), found in Staphylococcus aureus (strain USA300).